The sequence spans 159 residues: Troponin C, skeletal muscle (159 aa).

T1 is subject to N-acetylthreonine. EF-hand domains are found at residues 14-49, 50-85, 90-125, and 126-159; these read EMIAEFKAAFDMFDADGGGDISVKELGTVMRMLGQT, PTKEELDAIIEEVDEDGSGTIDFEEFLVMMVRQMKE, KSEEELAECFRIFDRNMDGYIDAEELAEIFRASGEH, and VTDEEIESIMKDGDKNNDGRIDFDEFLKMMEGVQ. Ca(2+) is bound by residues D27, D29, D33, E38, D63, D65, S67, T69, E74, D103, N105, D107, Y109, E114, D139, N141, D143, R145, and E150.

Belongs to the troponin C family.

Its function is as follows. Troponin is the central regulatory protein of striated muscle contraction. Tn consists of three components: Tn-I which is the inhibitor of actomyosin ATPase, Tn-T which contains the binding site for tropomyosin and Tn-C. The binding of calcium to Tn-C abolishes the inhibitory action of Tn on actin filaments. The protein is Troponin C, skeletal muscle (TNNC2) of Sus scrofa (Pig).